The sequence spans 208 residues: MKKFIFCFLYLYTLNIFAVSKIAHNKLNSCSITRNIFNNYEPKVFETTNNLLRKTGRLSKFYGEMILIRGKILDQNCVPVTDAKVYLWQAGSGGKYPYEPLKTRVDKRRFTNKSDSSFTGSGIVTTNNKGEYYFISMLPYKSSHYLRTANIRIEHPNLTTLETRLELSDQNMCDNDCGEISPILTETKKNIQSYCFDLVLQGTTLKRY.

Belongs to the intradiol ring-cleavage dioxygenase family.

The sequence is that of Putative dioxygenase RT0384 from Rickettsia typhi (strain ATCC VR-144 / Wilmington).